A 421-amino-acid polypeptide reads, in one-letter code: tRNA (guanine(37)-N(1))-methyltransferase (421 aa).

S-adenosyl-L-methionine is bound by residues R198, 242-243 (DL), 270-271 (DA), and N293.

It belongs to the class I-like SAM-binding methyltransferase superfamily. TRM5/TYW2 family. As to quaternary structure, monomer.

It localises to the mitochondrion matrix. The protein localises to the nucleus. Its subcellular location is the cytoplasm. It carries out the reaction guanosine(37) in tRNA + S-adenosyl-L-methionine = N(1)-methylguanosine(37) in tRNA + S-adenosyl-L-homocysteine + H(+). Specifically methylates the N1 position of guanosine-37 in various cytoplasmic and mitochondrial tRNAs. Methylation is not dependent on the nature of the nucleoside 5' of the target nucleoside. This is the first step in the biosynthesis of wybutosine (yW), a modified base adjacent to the anticodon of tRNAs and required for accurate decoding. The chain is tRNA (guanine(37)-N(1))-methyltransferase from Paramecium tetraurelia.